Consider the following 629-residue polypeptide: tRNA uridine 5-carboxymethylaminomethyl modification enzyme MnmG (629 aa).

FAD is bound by residues 14–19 (GAGHAG), V126, and S181. 273 to 287 (GPRYCPSIEDKVVRF) is a binding site for NAD(+). Q370 contributes to the FAD binding site.

This sequence belongs to the MnmG family. As to quaternary structure, homodimer. Heterotetramer of two MnmE and two MnmG subunits. The cofactor is FAD.

The protein resides in the cytoplasm. In terms of biological role, NAD-binding protein involved in the addition of a carboxymethylaminomethyl (cmnm) group at the wobble position (U34) of certain tRNAs, forming tRNA-cmnm(5)s(2)U34. This chain is tRNA uridine 5-carboxymethylaminomethyl modification enzyme MnmG, found in Bacillus mycoides (strain KBAB4) (Bacillus weihenstephanensis).